We begin with the raw amino-acid sequence, 212 residues long: Pyridoxine/pyridoxamine 5'-phosphate oxidase (212 aa).

Residues 8–11 and Lys-66 contribute to the substrate site; that span reads RREY. FMN contacts are provided by residues 61-66, 76-77, Arg-82, Lys-83, and Gln-105; these read RIVLLK and FT. 3 residues coordinate substrate: Tyr-123, Arg-127, and Ser-131. FMN is bound by residues 140–141 and Trp-185; that span reads QS. 191 to 193 contributes to the substrate binding site; the sequence is RLH. An FMN-binding site is contributed by Arg-195.

This sequence belongs to the pyridoxamine 5'-phosphate oxidase family. As to quaternary structure, homodimer. The cofactor is FMN.

It catalyses the reaction pyridoxamine 5'-phosphate + O2 + H2O = pyridoxal 5'-phosphate + H2O2 + NH4(+). The enzyme catalyses pyridoxine 5'-phosphate + O2 = pyridoxal 5'-phosphate + H2O2. It participates in cofactor metabolism; pyridoxal 5'-phosphate salvage; pyridoxal 5'-phosphate from pyridoxamine 5'-phosphate: step 1/1. Its pathway is cofactor metabolism; pyridoxal 5'-phosphate salvage; pyridoxal 5'-phosphate from pyridoxine 5'-phosphate: step 1/1. Catalyzes the oxidation of either pyridoxine 5'-phosphate (PNP) or pyridoxamine 5'-phosphate (PMP) into pyridoxal 5'-phosphate (PLP). In Shewanella sp. (strain MR-7), this protein is Pyridoxine/pyridoxamine 5'-phosphate oxidase.